A 500-amino-acid polypeptide reads, in one-letter code: Probable glycine dehydrogenase (decarboxylating) subunit 2 (500 aa).

An N6-(pyridoxal phosphate)lysine modification is found at Lys-273.

It belongs to the GcvP family. C-terminal subunit subfamily. The glycine cleavage system is composed of four proteins: P, T, L and H. In this organism, the P 'protein' is a heterodimer of two subunits. Pyridoxal 5'-phosphate is required as a cofactor.

The enzyme catalyses N(6)-[(R)-lipoyl]-L-lysyl-[glycine-cleavage complex H protein] + glycine + H(+) = N(6)-[(R)-S(8)-aminomethyldihydrolipoyl]-L-lysyl-[glycine-cleavage complex H protein] + CO2. In terms of biological role, the glycine cleavage system catalyzes the degradation of glycine. The P protein binds the alpha-amino group of glycine through its pyridoxal phosphate cofactor; CO(2) is released and the remaining methylamine moiety is then transferred to the lipoamide cofactor of the H protein. The sequence is that of Probable glycine dehydrogenase (decarboxylating) subunit 2 from Rhodopirellula baltica (strain DSM 10527 / NCIMB 13988 / SH1).